A 307-amino-acid polypeptide reads, in one-letter code: N-acetylmuramic acid 6-phosphate etherase (307 aa).

Residues 62–225 form the SIS domain; it reads IVLAFQKGAR…TTASMIRIGK (164 aa). E90 acts as the Proton donor in catalysis. E121 is a catalytic residue.

This sequence belongs to the GCKR-like family. MurNAc-6-P etherase subfamily. As to quaternary structure, homodimer.

It carries out the reaction N-acetyl-D-muramate 6-phosphate + H2O = N-acetyl-D-glucosamine 6-phosphate + (R)-lactate. Its pathway is amino-sugar metabolism; 1,6-anhydro-N-acetylmuramate degradation. The protein operates within amino-sugar metabolism; N-acetylmuramate degradation. It participates in cell wall biogenesis; peptidoglycan recycling. Functionally, specifically catalyzes the cleavage of the D-lactyl ether substituent of MurNAc 6-phosphate, producing GlcNAc 6-phosphate and D-lactate. Together with AnmK, is also required for the utilization of anhydro-N-acetylmuramic acid (anhMurNAc) either imported from the medium or derived from its own cell wall murein, and thus plays a role in cell wall recycling. The polypeptide is N-acetylmuramic acid 6-phosphate etherase (Mesorhizobium japonicum (strain LMG 29417 / CECT 9101 / MAFF 303099) (Mesorhizobium loti (strain MAFF 303099))).